Consider the following 213-residue polypeptide: N-(5'-phosphoribosyl)anthranilate isomerase (213 aa).

It belongs to the TrpF family.

The catalysed reaction is N-(5-phospho-beta-D-ribosyl)anthranilate = 1-(2-carboxyphenylamino)-1-deoxy-D-ribulose 5-phosphate. It functions in the pathway amino-acid biosynthesis; L-tryptophan biosynthesis; L-tryptophan from chorismate: step 3/5. The chain is N-(5'-phosphoribosyl)anthranilate isomerase from Hahella chejuensis (strain KCTC 2396).